A 158-amino-acid polypeptide reads, in one-letter code: MTELTHINQNGEANMVDVSGKQDTVREARAEAFIGMNAETLQMIMSGNHHKGDVFATARIAGIQAAKRTWELIPLCHPLLLSKVEVNLTALPESNQVRIESLCKLTGKTGVEMEALTAASVAALTIYDMCKAVQKDMVISQVRLLEKCGGKSGHFVAA.

Substrate is bound by residues 75 to 77 (LCH) and 113 to 114 (ME). Aspartate 128 is an active-site residue.

This sequence belongs to the MoaC family. As to quaternary structure, homohexamer; trimer of dimers.

The catalysed reaction is (8S)-3',8-cyclo-7,8-dihydroguanosine 5'-triphosphate = cyclic pyranopterin phosphate + diphosphate. It functions in the pathway cofactor biosynthesis; molybdopterin biosynthesis. Its function is as follows. Catalyzes the conversion of (8S)-3',8-cyclo-7,8-dihydroguanosine 5'-triphosphate to cyclic pyranopterin monophosphate (cPMP). This is Cyclic pyranopterin monophosphate synthase from Actinobacillus succinogenes (strain ATCC 55618 / DSM 22257 / CCUG 43843 / 130Z).